The following is a 361-amino-acid chain: Mitogen-activated protein kinase 14B (361 aa).

Residues 25–309 (YQNLSPVGSG…ASQALAHPYF (285 aa)) form the Protein kinase domain. Residues 31 to 39 (VGSGAYGSV) and Lys-54 each bind ATP. The active-site Proton acceptor is the Asp-151. Thr-181 bears the Phosphothreonine; by MAP2K6 mark. A TXY motif is present at residues 181–183 (TGY). The residue at position 183 (Tyr-183) is a Phosphotyrosine; by MAP2K6.

It belongs to the protein kinase superfamily. CMGC Ser/Thr protein kinase family. MAP kinase subfamily. Mg(2+) is required as a cofactor. Dually phosphorylated on Thr-181 and Tyr-183, which activates the enzyme. As to expression, predominantly expressed in the ovary. Lower levels present in brain, gill, heart, spleen, kidney, muscle and gut.

It is found in the cytoplasm. The protein resides in the nucleus. The catalysed reaction is L-seryl-[protein] + ATP = O-phospho-L-seryl-[protein] + ADP + H(+). The enzyme catalyses L-threonyl-[protein] + ATP = O-phospho-L-threonyl-[protein] + ADP + H(+). Its activity is regulated as follows. Activated by threonine and tyrosine phosphorylation by the dual specificity kinase, MKK6. Functionally, serine/threonine kinase which acts as an essential component of the MAP kinase signal transduction pathway. Mapk14b is one of the four p38 MAPKs which play an important role in the cascades of cellular responses evoked by extracellular stimuli such as pro-inflammatory cytokines or physical stress leading to direct activation of transcription factors. Accordingly, p38 MAPKs phosphorylate a broad range of proteins and it has been estimated that they may have approximately 200 to 300 substrates each. Some of the targets are downstream kinases which are activated through phosphorylation and further phosphorylate additional targets. The sequence is that of Mitogen-activated protein kinase 14B (mapk14b) from Cyprinus carpio (Common carp).